A 113-amino-acid chain; its full sequence is Protein AV2 (113 aa).

The tract at residues S94 to V113 is disordered.

The protein belongs to the geminiviridae protein AV2/V2 family. As to quaternary structure, interacts with host SGS3.

The protein resides in the host cytoplasm. It localises to the host perinuclear region. Its function is as follows. Through its interaction with host SGS3, acts as a suppressor of RNA-mediated gene silencing, also known as post-transcriptional gene silencing (PTGS), a mechanism of plant viral defense that limits the accumulation of viral RNAs. The chain is Protein AV2 from African cassava mosaic virus (isolate West Kenyan 844) (ACMV).